The following is a 405-amino-acid chain: GTPase Obg (405 aa).

One can recognise an Obg domain in the interval 1–159 (MKFVDEVSIF…RDLKLELKVL (159 aa)). The interval 127–148 (NTRFKSSTNRAPRQTTPGKPGE) is disordered. Residues 129–143 (RFKSSTNRAPRQTTP) are compositionally biased toward polar residues. Residues 160-333 (ADVGLLGLPN…LCQDIMHYLD (174 aa)) enclose the OBG-type G domain. Residues 166–173 (GLPNAGKS), 191–195 (FTTLV), 213–216 (DIPG), 283–286 (NKAD), and 314–316 (SAL) each bind GTP. Mg(2+) is bound by residues Ser-173 and Thr-193. The span at 383-398 (ALEDEDDFDDEDDGDG) shows a compositional bias: acidic residues. Residues 383-405 (ALEDEDDFDDEDDGDGPEIFYVR) are disordered.

This sequence belongs to the TRAFAC class OBG-HflX-like GTPase superfamily. OBG GTPase family. Monomer. It depends on Mg(2+) as a cofactor.

The protein resides in the cytoplasm. Its function is as follows. An essential GTPase which binds GTP, GDP and possibly (p)ppGpp with moderate affinity, with high nucleotide exchange rates and a fairly low GTP hydrolysis rate. Plays a role in control of the cell cycle, stress response, ribosome biogenesis and in those bacteria that undergo differentiation, in morphogenesis control. This chain is GTPase Obg, found in Azotobacter vinelandii (strain DJ / ATCC BAA-1303).